Consider the following 245-residue polypeptide: PF03932 family protein CutC (245 aa).

It belongs to the CutC family.

The protein localises to the cytoplasm. This chain is PF03932 family protein CutC, found in Sinorhizobium medicae (strain WSM419) (Ensifer medicae).